The sequence spans 121 residues: Large ribosomal subunit protein bL17 (121 aa).

The protein belongs to the bacterial ribosomal protein bL17 family. In terms of assembly, part of the 50S ribosomal subunit. Contacts protein L32.

This chain is Large ribosomal subunit protein bL17, found in Metamycoplasma arthritidis (strain 158L3-1) (Mycoplasma arthritidis).